The primary structure comprises 415 residues: MAENLYRARSRVYSPSVLFLHPDMGIGGAERLVLDAALALQEYGCDVKIWTAHYDPNHCFIETRELSVQCAGDWLPRSLGWGGRGAAICSYVRMVFLALYVLFLSGEEFDVVVCDQVSACIPVFKLARRRKRVLFYCHFPDLLLTQRNSALKKFYRAPIDWIEEYTTGMADRILVNSQYTASVFKETFKTLSHRNPDVLYPSLNIGSFDLAIPEKIDDLVPKGKQFLFLSINRYERKKNLPLALRSLVQLRNRLPSQEWDKVHLFMAGGYDDRIPENVEHYKELKKMVQESDLERHVTFLRSFSDRQKISLLHGCLCVLYTPSNEHFGIVPLEAMYMQCPVIAVNNGGPLESIVHKVTGFLCEPDPVHFSEAMEKFIHKPSLKATMGLAGKARVAEKFSADAFADQLYQYVTKLV.

The Cytoplasmic segment spans residues 1 to 84 (MAENLYRARS…LPRSLGWGGR (84 aa)). Residues 85–105 (GAAICSYVRMVFLALYVLFLS) constitute an intramembrane region (helical). The Cytoplasmic segment spans residues 106 to 415 (GEEFDVVVCD…QLYQYVTKLV (310 aa)).

It belongs to the glycosyltransferase group 1 family. Glycosyltransferase 4 subfamily.

It is found in the endoplasmic reticulum membrane. The catalysed reaction is a beta-D-Man-(1-&gt;4)-beta-D-GlcNAc-(1-&gt;4)-alpha-D-GlcNAc-diphospho-di-trans,poly-cis-dolichol + GDP-alpha-D-mannose = an alpha-D-Man-(1-&gt;3)-beta-D-Man-(1-&gt;4)-beta-D-GlcNAc-(1-&gt;4)-alpha-D-GlcNAc-diphospho-di-trans,poly-cis-dolichol + GDP + H(+). The enzyme catalyses an alpha-D-Man-(1-&gt;3)-beta-D-Man-(1-&gt;4)-beta-D-GlcNAc-(1-&gt;4)-alpha-D-GlcNAc-diphospho-di-trans,poly-cis-dolichol + GDP-alpha-D-mannose = an alpha-D-Man-(1-&gt;3)-[alpha-D-Man-(1-&gt;6)]-beta-D-Man-(1-&gt;4)-beta-D-GlcNAc-(1-&gt;4)-alpha-D-GlcNAc-diphospho-di-trans,poly-cis-dolichol + GDP + H(+). It catalyses the reaction a beta-D-Man-(1-&gt;4)-beta-D-GlcNAc-(1-&gt;4)-alpha-D-GlcNAc-diphospho-di-trans,poly-cis-dolichol + GDP-alpha-D-mannose = an alpha-D-Man-(1-&gt;6)-beta-D-Man-(1-&gt;4)-beta-D-GlcNAc-(1-&gt;4)-alpha-D-GlcNAc-diphospho-di-trans,poly-cis-dolichol + GDP + H(+). It carries out the reaction an alpha-D-Man-(1-&gt;6)-beta-D-Man-(1-&gt;4)-beta-D-GlcNAc-(1-&gt;4)-alpha-D-GlcNAc-diphospho-di-trans,poly-cis-dolichol + GDP-alpha-D-mannose = an alpha-D-Man-(1-&gt;3)-[alpha-D-Man-(1-&gt;6)]-beta-D-Man-(1-&gt;4)-beta-D-GlcNAc-(1-&gt;4)-alpha-D-GlcNAc-diphospho-di-trans,poly-cis-dolichol + GDP + H(+). Its pathway is protein modification; protein glycosylation. In terms of biological role, mannosyltransferase that operates in the biosynthetic pathway of dolichol-linked oligosaccharides, the glycan precursors employed in protein asparagine (N)-glycosylation. The assembly of dolichol-linked oligosaccharides begins on the cytosolic side of the endoplasmic reticulum membrane and finishes in its lumen. The sequential addition of sugars to dolichol pyrophosphate produces dolichol-linked oligosaccharides containing fourteen sugars, including two GlcNAcs, nine mannoses and three glucoses. Once assembled, the oligosaccharide is transferred from the lipid to nascent proteins by oligosaccharyltransferases. Catalyzes, on the cytoplasmic face of the endoplasmic reticulum, the addition of the second and third mannose residues to the dolichol-linked oligosaccharide chain, to produce Man3GlcNAc(2)-PP-dolichol core oligosaccharide. Man3GlcNAc(2)-PP-dolichol is a substrate for ALG11, the following enzyme in the biosynthetic pathway. While both alpha 1,3 and alpha 1,6 linkages are possible, the sequential addition of alpha 1,3 followed by alpha 1,6 is probably the preferred route. In Mus musculus (Mouse), this protein is Alpha-1,3/1,6-mannosyltransferase ALG2 (Alg2).